Here is an 83-residue protein sequence, read N- to C-terminus: Mu-theraphotoxin-Hhn2i (83 aa).

The first 21 residues, 1–21 (MKASMFLALAGLVLLFVVGYA), serve as a signal peptide directing secretion. The propeptide occupies 22–48 (SESEEKEFPRELLSKIFAVDDFKGEER). 3 disulfide bridges follow: C50–C65, C57–C70, and C64–C77. L81 is subject to Leucine amide.

It belongs to the neurotoxin 10 (Hwtx-1) family. 15 (Hntx-3) subfamily. In terms of assembly, monomer. Expressed by the venom gland.

It is found in the secreted. Lethal neurotoxin. Selectively blocks tetrodotoxin-sensitive voltage-gated sodium channels (Nav). Does not affect tetrodotoxin-resistant voltage-gated sodium channels or calcium channels. This is Mu-theraphotoxin-Hhn2i from Cyriopagopus hainanus (Chinese bird spider).